We begin with the raw amino-acid sequence, 282 residues long: Chlorite dismutase (282 aa).

The first 31 residues, 1–31 (MTNLSIHNFKLSLVAAVIGSAMVMTSSPVAA), serve as a signal peptide directing secretion. Glu-104 is a binding site for Ca(2+). His-204 is a heme binding site. Arg-217 serves as the catalytic Proton acceptor. Ca(2+) is bound by residues Asp-226 and Thr-265.

This sequence belongs to the chlorite dismutase family. As to quaternary structure, homopentamer. Requires heme b as cofactor.

It localises to the periplasm. It catalyses the reaction chloride + O2 = chlorite. In terms of biological role, catalyzes the heme-dependent decomposition of chlorite to O(2) and chloride with high efficiency and specificity. Used to detoxify chlorite, a by-product of the reduction of perchlorate, a primarily anthropogenic pollutant, in perchlorate-respiring bacteria. In Dechloromonas aromatica (strain RCB), this protein is Chlorite dismutase.